A 293-amino-acid chain; its full sequence is MKTAWVFPGQGSQAVGMGVDLLSTAIAKEKYQQAEEILGWSVVEKCQGDEASLALTQNTQPCLYVIEAILADLLRDKGFQPDYVAGHSLGEYSALYAAGVFDFATGLQLVKQRSEVMASASGGMMAALMKFDQTQLQQALTDNTEVVLANDNSPEQVVISGTVAGVEAILANVKARRAVPLKVSGAFHSSFMAQPSQSFAQTLTACHFNDATVPVLSNVDPSPTQNGDRLKEKLIQQMTGSVRWRETMVNLGEIGATDYWEVGPGKVLTGLCKRTCPDLNLKNIGQLDDLNSL.

Catalysis depends on residues Ser88 and His188.

It belongs to the FabD family.

The enzyme catalyses holo-[ACP] + malonyl-CoA = malonyl-[ACP] + CoA. It participates in lipid metabolism; fatty acid biosynthesis. This chain is Malonyl CoA-acyl carrier protein transacylase (fabD), found in Synechocystis sp. (strain ATCC 27184 / PCC 6803 / Kazusa).